Consider the following 227-residue polypeptide: Cytochrome c oxidase subunit 2 (227 aa).

Residues 1–14 are Mitochondrial intermembrane-facing; the sequence is MAHPVQLGLQDATS. Residues 15–45 form a helical membrane-spanning segment; it reads PVMEELVTFHDHALMAMFLISFLILYALSAT. At 46–59 the chain is on the mitochondrial matrix side; it reads LTTKLTNTNITDAQ. The helical transmembrane segment at 60 to 87 threads the bilayer; that stretch reads EMETIWTILPAVILVLIALPSLRILYMT. At 88 to 227 the chain is on the mitochondrial intermembrane side; sequence DEINNPSFTI…IFEMGPVFTL (140 aa). Histidine 161, cysteine 196, glutamate 198, cysteine 200, histidine 204, and methionine 207 together coordinate Cu cation. Glutamate 198 contacts Mg(2+).

Belongs to the cytochrome c oxidase subunit 2 family. In terms of assembly, component of the cytochrome c oxidase (complex IV, CIV), a multisubunit enzyme composed of 14 subunits. The complex is composed of a catalytic core of 3 subunits MT-CO1, MT-CO2 and MT-CO3, encoded in the mitochondrial DNA, and 11 supernumerary subunits COX4I, COX5A, COX5B, COX6A, COX6B, COX6C, COX7A, COX7B, COX7C, COX8 and NDUFA4, which are encoded in the nuclear genome. The complex exists as a monomer or a dimer and forms supercomplexes (SCs) in the inner mitochondrial membrane with NADH-ubiquinone oxidoreductase (complex I, CI) and ubiquinol-cytochrome c oxidoreductase (cytochrome b-c1 complex, complex III, CIII), resulting in different assemblies (supercomplex SCI(1)III(2)IV(1) and megacomplex MCI(2)III(2)IV(2)). Found in a complex with TMEM177, COA6, COX18, COX20, SCO1 and SCO2. Interacts with TMEM177 in a COX20-dependent manner. Interacts with COX20. Interacts with COX16. The cofactor is Cu cation.

The protein resides in the mitochondrion inner membrane. The catalysed reaction is 4 Fe(II)-[cytochrome c] + O2 + 8 H(+)(in) = 4 Fe(III)-[cytochrome c] + 2 H2O + 4 H(+)(out). Component of the cytochrome c oxidase, the last enzyme in the mitochondrial electron transport chain which drives oxidative phosphorylation. The respiratory chain contains 3 multisubunit complexes succinate dehydrogenase (complex II, CII), ubiquinol-cytochrome c oxidoreductase (cytochrome b-c1 complex, complex III, CIII) and cytochrome c oxidase (complex IV, CIV), that cooperate to transfer electrons derived from NADH and succinate to molecular oxygen, creating an electrochemical gradient over the inner membrane that drives transmembrane transport and the ATP synthase. Cytochrome c oxidase is the component of the respiratory chain that catalyzes the reduction of oxygen to water. Electrons originating from reduced cytochrome c in the intermembrane space (IMS) are transferred via the dinuclear copper A center (CU(A)) of subunit 2 and heme A of subunit 1 to the active site in subunit 1, a binuclear center (BNC) formed by heme A3 and copper B (CU(B)). The BNC reduces molecular oxygen to 2 water molecules using 4 electrons from cytochrome c in the IMS and 4 protons from the mitochondrial matrix. The polypeptide is Cytochrome c oxidase subunit 2 (MT-CO2) (Theropithecus gelada (Gelada baboon)).